The primary structure comprises 141 residues: Large ribosomal subunit protein uL16 (141 aa).

Residues 1–21 (MLMPKRTKFRKQMKGRNRGKS) are compositionally biased toward basic residues. The tract at residues 1–22 (MLMPKRTKFRKQMKGRNRGKSF) is disordered.

The protein belongs to the universal ribosomal protein uL16 family. As to quaternary structure, part of the 50S ribosomal subunit.

Binds 23S rRNA and is also seen to make contacts with the A and possibly P site tRNAs. This Wolinella succinogenes (strain ATCC 29543 / DSM 1740 / CCUG 13145 / JCM 31913 / LMG 7466 / NCTC 11488 / FDC 602W) (Vibrio succinogenes) protein is Large ribosomal subunit protein uL16.